The sequence spans 1745 residues: Tight junction protein 1 (1745 aa).

A PDZ 1 domain is found at Thr23–Lys110. Over residues Ala102–Val112 the composition is skewed to basic residues. Residues Ala102–Leu189 form a disordered region. The segment covering Pro123–Val136 has biased composition (acidic residues). Ser125 carries the post-translational modification Phosphoserine. A Phosphotyrosine modification is found at Tyr132. Basic and acidic residues predominate over residues Arg149–Ser175. Phosphoserine is present on residues Ser175, Ser178, and Ser179. Phosphothreonine is present on Thr185. Positions Lys186–Glu264 constitute a PDZ 2 domain. Ser212 and Ser241 each carry phosphoserine. Phosphothreonine is present on Thr267. Phosphoserine occurs at positions 275, 277, 280, 284, 290, 294, 297, 300, 323, 329, 334, 337, and 353. The disordered stretch occupies residues Ala296–Pro364. The span at His299 to Pro308 shows a compositional bias: basic and acidic residues. The segment covering His325–Leu338 has biased composition (polar residues). Thr354 carries the post-translational modification Phosphothreonine. The region spanning Ser421–Lys502 is the PDZ 3 domain. The SH3 domain maps to Gly516 to Ala584. The Guanylate kinase-like domain occupies Ser610 to Gln791. 2 positions are modified to phosphoserine: Ser617 and Ser622. The occludin (OCLN)-binding region stretch occupies residues Tyr633–Arg876. Position 809 is a phosphothreonine (Thr809). Phosphoserine occurs at positions 810 and 821. Residue Tyr822 is modified to Phosphotyrosine. Residues Ser824, Ser828, and Ser837 each carry the phosphoserine modification. 2 disordered regions span residues Ala825–Ala944 and Leu956–Gln1042. 5 positions are modified to phosphothreonine: Thr846, Thr848, Thr854, Thr861, and Thr868. The segment covering Glu879–Asn892 has biased composition (basic and acidic residues). The span at Gln893–Ala906 shows a compositional bias: low complexity. Ser912 is modified (phosphoserine). The span at Asp998–Arg1014 shows a compositional bias: basic and acidic residues. Ser1071 bears the Phosphoserine mark. The segment at Gln1090–Gly1586 is disordered. Basic and acidic residues predominate over residues Glu1106 to Glu1124. Phosphoserine is present on Ser1138. Residues Tyr1139 and Tyr1164 each carry the phosphotyrosine modification. The tract at residues Arg1150–Pro1370 is actin-binding region (ABR). 2 stretches are compositionally biased toward basic and acidic residues: residues Lys1268–Asn1285 and Pro1335–Asp1346. Tyr1353 is subject to Phosphotyrosine. A Phosphoserine modification is found at Ser1365. Residues Ser1388–Ser1399 show a composition bias toward low complexity. Positions Gly1401 to Asp1418 are enriched in basic and acidic residues. Position 1411 is a phosphoserine (Ser1411). Residues Ser1431–Leu1445 show a composition bias toward low complexity. 2 stretches are compositionally biased toward polar residues: residues Glu1455–Met1468 and Ala1510–Pro1519. Positions Pro1535–Lys1544 are enriched in basic and acidic residues. A Phosphoserine modification is found at Ser1542. A compositionally biased stretch (polar residues) spans Ser1561–Pro1580. Ser1614 is modified (phosphoserine). In terms of domain architecture, ZU5 spans Ala1631 to Phe1745.

Belongs to the MAGUK family. As to quaternary structure, homodimer. Forms heterodimers TJP3. Forms a heterodimer (via PDZ2 domain) with TJP2/ZO2 (via PDZ2 domain). Interacts with OCLN, CALM, claudins, CGN/cingulin, CXADR, GJD3 and UBN1. Interacts (via ZU5 domain) with CDC42BPB. Interacts (via PDZ domain) with GJA1. Interacts (via PDZ domains) with ANKRD2. Interacts with POPDC1 (via the C-terminus cytoplasmic tail). Interacts with GJA12 and KIRREL1. Interacts with HSPA4. Interacts (via ZU5 domain) with MYZAP. Interacts with DLL1. Interacts with USP53 (via the C-terminal region). Interacts with DNMBP (via C-terminal domain); required for the apical cell-cell junction localization of DNMBP. Interacts with SPEF1. Interacts (via N-terminus) with CTNNA1. Interacts with CLDN18. Interacts with CLDN16 (via TRV motif); this is a prerequisite for anchoring of CLDN16 at the tight junction. Interacts with PKP1; the interaction facilitates TJP1/ZO-1 localization to the plasma membrane. Interacts with PATJ (via PDZ1-6 domains); the interaction is required for attachment and extension of TJP1/ZO1 condensates along the apical cell interface. In terms of processing, phosphorylated at tyrosine redidues in response to epidermal growth factor (EGF). This response is dependent on an intact actin microfilament system. Dephosphorylated by PTPRJ. As to expression, expressed between ameloblasts, at ameloblast-ameloblast junctions and in the stratum intermedium during pre-secretory and secretory stages of tooth development (at protein level).

Its subcellular location is the cell membrane. It localises to the cell junction. The protein localises to the tight junction. It is found in the gap junction. The protein resides in the cytoplasm. Its subcellular location is the myofibril. It localises to the sarcomere. The protein localises to the i band. In terms of biological role, tjp1, TjpP2, and Tjp3 are closely related scaffolding proteins that link tight junction (TJ) transmembrane proteins such as claudins, junctional adhesion molecules, and occludin to the actin cytoskeleton. Forms a multistranded TJP1/ZO1 condensate which elongates to form a tight junction belt, the belt is anchored at the apical cell membrane via interaction with PATJ. The tight junction acts to limit movement of substances through the paracellular space and as a boundary between the compositionally distinct apical and basolateral plasma membrane domains of epithelial and endothelial cells. Necessary for lumenogenesis, and particularly efficient epithelial polarization and barrier formation. Plays a role in the regulation of cell migration by targeting Cdc42bpb to the leading edge of migrating cells. Plays an important role in podosome formation and associated function, thus regulating cell adhesion and matrix remodeling. With Tjp2 and TJjp3, participates in the junctional retention and stability of the transcription factor Dbpa, but is not involved in its shuttling to the nucleus. May play a role in mediating cell morphology changes during ameloblast differentiation via its role in tight junctions. The chain is Tight junction protein 1 from Mus musculus (Mouse).